The chain runs to 314 residues: MFKEEDSLRKGQNVAAWKTLLAGAVSGLLARSITAPMDTIKIRLQLTPANGLKPFGSQVMEVARSMIKNEGIRAFWKGNIPGSLLYVTYGSAQFSSYSLFNRYLTPFGLEARLHSLVVGAFAGITSSIVSYPFDVLRTRLVANNQMHSMSITREVRDIWKLEGLPGFFKGSIASMTTITLTASIMFGTYETIRIYCDENEKTTAAHKKWELATLNHSAGTIGGVIAKIITFPLETIRRRMQFMNSKHLEKFSRHSSVYGSYKGYGFARIGLQILKQEGVSSLYRGILVALSKTIPTTFVSFWGYETAIHYLRMY.

Transmembrane regions (helical) follow at residues 14–30 (VAAW…GLLA), 84–100 (LLYV…YSLF), 116–136 (LVVG…FDVL), 170–186 (GSIA…SIMF), 217–233 (SAGT…TFPL), and 285–302 (GILV…VSFW). Solcar repeat units follow at residues 14-103 (VAAW…FNRY), 110-195 (EARL…IRIY), and 210-310 (ELAT…AIHY).

Belongs to the mitochondrial carrier (TC 2.A.29) family.

It localises to the mitochondrion inner membrane. Its function is as follows. Mitochondrial transporter that mediates uptake of thiamine pyrophosphate (ThPP) into mitochondria. In Saccharomyces cerevisiae (strain YJM789) (Baker's yeast), this protein is Mitochondrial thiamine pyrophosphate carrier 1 (TPC1).